A 356-amino-acid chain; its full sequence is Tyrosine recombinase XerS (356 aa).

The Core-binding (CB) domain occupies 16-121; that stretch reads IMPWYVLDYY…ALSSLYKYLT (106 aa). Positions 169 to 354 constitute a Tyr recombinase domain; the sequence is AFLDYVDKEY…VNDEQKNALD (186 aa). Active-site residues include Arg-210, Lys-234, His-306, Arg-309, and His-332. Catalysis depends on Tyr-341, which acts as the O-(3'-phospho-DNA)-tyrosine intermediate.

It belongs to the 'phage' integrase family. XerS subfamily.

It is found in the cytoplasm. With respect to regulation, ftsK is required for recombination. In terms of biological role, site-specific tyrosine recombinase, which acts by catalyzing the cutting and rejoining of the recombining DNA molecules. Essential to convert dimers of the bacterial chromosome into monomers to permit their segregation at cell division. In Streptococcus pyogenes serotype M18 (strain MGAS8232), this protein is Tyrosine recombinase XerS.